The chain runs to 505 residues: Probable alpha-L-arabinofuranosidase C (505 aa).

Asn-152, Asn-181, and Asn-269 each carry an N-linked (GlcNAc...) asparagine glycan.

It belongs to the glycosyl hydrolase 51 family.

The protein resides in the secreted. It carries out the reaction Hydrolysis of terminal non-reducing alpha-L-arabinofuranoside residues in alpha-L-arabinosides.. The protein operates within glycan metabolism; L-arabinan degradation. In terms of biological role, alpha-L-arabinofuranosidase involved in the degradation of arabinoxylan, a major component of plant hemicellulose. Acts only on small linear 1,5-alpha-linked L-arabinofuranosyl oligosaccharides. The protein is Probable alpha-L-arabinofuranosidase C (abfC) of Aspergillus niger (strain ATCC MYA-4892 / CBS 513.88 / FGSC A1513).